A 133-amino-acid polypeptide reads, in one-letter code: Holo-[acyl-carrier-protein] synthase (133 aa).

Mg(2+) is bound by residues aspartate 8 and glutamate 57.

This sequence belongs to the P-Pant transferase superfamily. AcpS family. Mg(2+) serves as cofactor.

The protein resides in the cytoplasm. It catalyses the reaction apo-[ACP] + CoA = holo-[ACP] + adenosine 3',5'-bisphosphate + H(+). Functionally, transfers the 4'-phosphopantetheine moiety from coenzyme A to a Ser of acyl-carrier-protein. This is Holo-[acyl-carrier-protein] synthase from Caulobacter vibrioides (strain ATCC 19089 / CIP 103742 / CB 15) (Caulobacter crescentus).